A 389-amino-acid chain; its full sequence is Urotensin-2 receptor (389 aa).

The span at Met1–Ser10 shows a compositional bias: polar residues. The segment at Met1–Pro39 is disordered. Residues Met1–Ile54 are Extracellular-facing. Residues Asn29 and Asn33 are each glycosylated (N-linked (GlcNAc...) asparagine). A compositionally biased stretch (polar residues) spans Ala30–Pro39. A helical membrane pass occupies residues Gly55–Cys77. The Cytoplasmic portion of the chain corresponds to Arg78–Tyr87. A helical transmembrane segment spans residues Val88–Thr113. The Extracellular portion of the chain corresponds to Lys114–Arg124. Cys123 and Cys199 are disulfide-bonded. The chain crosses the membrane as a helical span at residues Val125–Ser146. The Cytoplasmic portion of the chain corresponds to Glu147–Lys167. Residues Leu168–Leu186 traverse the membrane as a helical segment. The Extracellular portion of the chain corresponds to Ala187–Arg209. The helical transmembrane segment at Ala210–Ala232 threads the bilayer. Topologically, residues Arg233–Arg258 are cytoplasmic. A helical transmembrane segment spans residues Leu259–His284. The Extracellular segment spans residues Gln285–Asn297. The helical transmembrane segment at Tyr298–Leu318 threads the bilayer. Residues Thr319 to Ala389 are Cytoplasmic-facing. The tract at residues Gly328 to Ala389 is disordered. The span at Arg331–Gly340 shows a compositional bias: gly residues. The span at Ser355–Asp368 shows a compositional bias: polar residues. Positions Pro377–Ala389 are enriched in pro residues.

Belongs to the G-protein coupled receptor 1 family. Most abundant expression in the heart and pancreas.

The protein localises to the cell membrane. Its function is as follows. High affinity receptor for urotensin-2 and urotensin-2B. The activity of this receptor is mediated by a G-protein that activate a phosphatidylinositol-calcium second messenger system. This Homo sapiens (Human) protein is Urotensin-2 receptor (UTS2R).